Here is an 831-residue protein sequence, read N- to C-terminus: Periplasmic nitrate reductase (831 aa).

A signal peptide (tat-type signal) is located at residues 1–29; that stretch reads MTLSRRDFIKQTAVAATASVAGVTLPAGA. The 4Fe-4S Mo/W bis-MGD-type domain occupies 41–97; that stretch reads LKWSKAPCRFCGTGCGVTVAVRDNKVVATNGDPQAEVNKGLNCVKGYFLSKIMYGQD. 4 residues coordinate [4Fe-4S] cluster: Cys-48, Cys-51, Cys-55, and Cys-83. Mo-bis(molybdopterin guanine dinucleotide)-binding positions include Lys-85, Gln-152, Asn-177, Cys-181, 214-221, 245-249, 264-266, Met-375, Gln-379, Asn-485, 511-512, Lys-534, Asp-561, and 721-730; these read WGSNMAEM, STFTH, QTD, SD, and TGRVLEHWHS. Position 797 (Trp-797) interacts with substrate. Mo-bis(molybdopterin guanine dinucleotide)-binding residues include Asn-805 and Lys-822.

It belongs to the prokaryotic molybdopterin-containing oxidoreductase family. NasA/NapA/NarB subfamily. In terms of assembly, component of the periplasmic nitrate reductase NapAB complex composed of NapA and NapB. [4Fe-4S] cluster serves as cofactor. Requires Mo-bis(molybdopterin guanine dinucleotide) as cofactor. In terms of processing, predicted to be exported by the Tat system. The position of the signal peptide cleavage has not been experimentally proven.

Its subcellular location is the periplasm. The catalysed reaction is 2 Fe(II)-[cytochrome] + nitrate + 2 H(+) = 2 Fe(III)-[cytochrome] + nitrite + H2O. Catalytic subunit of the periplasmic nitrate reductase complex NapAB. Receives electrons from NapB and catalyzes the reduction of nitrate to nitrite. The protein is Periplasmic nitrate reductase of Cupriavidus taiwanensis (strain DSM 17343 / BCRC 17206 / CCUG 44338 / CIP 107171 / LMG 19424 / R1) (Ralstonia taiwanensis (strain LMG 19424)).